Reading from the N-terminus, the 240-residue chain is Enolase-phosphatase E1 (240 aa).

Mg(2+)-binding residues include aspartate 9 and glutamate 11. Residues 129-130 and lysine 168 contribute to the substrate site; that span reads SS. Aspartate 195 is a Mg(2+) binding site.

The protein belongs to the HAD-like hydrolase superfamily. MasA/MtnC family. Monomer. Requires Mg(2+) as cofactor.

The protein localises to the cytoplasm. It is found in the nucleus. The enzyme catalyses 5-methylsulfanyl-2,3-dioxopentyl phosphate + H2O = 1,2-dihydroxy-5-(methylsulfanyl)pent-1-en-3-one + phosphate. The protein operates within amino-acid biosynthesis; L-methionine biosynthesis via salvage pathway; L-methionine from S-methyl-5-thio-alpha-D-ribose 1-phosphate: step 3/6. It participates in amino-acid biosynthesis; L-methionine biosynthesis via salvage pathway; L-methionine from S-methyl-5-thio-alpha-D-ribose 1-phosphate: step 4/6. In terms of biological role, bifunctional enzyme that catalyzes the enolization of 2,3-diketo-5-methylthiopentyl-1-phosphate (DK-MTP-1-P) into the intermediate 2-hydroxy-3-keto-5-methylthiopentenyl-1-phosphate (HK-MTPenyl-1-P), which is then dephosphorylated to form the acireductone 1,2-dihydroxy-3-keto-5-methylthiopentene (DHK-MTPene). This Candida tropicalis (strain ATCC MYA-3404 / T1) (Yeast) protein is Enolase-phosphatase E1.